A 301-amino-acid polypeptide reads, in one-letter code: Sulfate adenylyltransferase subunit 2 (301 aa).

A disordered region spans residues 279–301; it reads RQGRLIDHDQDGSMEKKKQEGYF.

It belongs to the PAPS reductase family. CysD subfamily. Heterodimer composed of CysD, the smaller subunit, and CysN.

It catalyses the reaction sulfate + ATP + H(+) = adenosine 5'-phosphosulfate + diphosphate. Its pathway is sulfur metabolism; hydrogen sulfide biosynthesis; sulfite from sulfate: step 1/3. Its function is as follows. With CysN forms the ATP sulfurylase (ATPS) that catalyzes the adenylation of sulfate producing adenosine 5'-phosphosulfate (APS) and diphosphate, the first enzymatic step in sulfur assimilation pathway. APS synthesis involves the formation of a high-energy phosphoric-sulfuric acid anhydride bond driven by GTP hydrolysis by CysN coupled to ATP hydrolysis by CysD. In Geotalea uraniireducens (strain Rf4) (Geobacter uraniireducens), this protein is Sulfate adenylyltransferase subunit 2.